We begin with the raw amino-acid sequence, 206 residues long: MAEAVAQPVETVAHTFAPKLFNKWSYDVTVSDISLKELLAINSKLKYQVFLPHTAGRYQIKPFRKIQCPIVERLVCCMMQHGKNSGKKLLAMRVVEESFEIIHLLTEKNPIQVLVDAIINASPREDSTRVGTGGNAKRQAVDVSPLRRINQALYLMTMGCRSAAFRNSKTLAECLADEIVNASKSNTASFAIKKKEDMERVAKSNR.

It belongs to the universal ribosomal protein uS7 family. As to quaternary structure, component of the small ribosomal subunit.

It is found in the cytoplasm. In terms of biological role, component of the small ribosomal subunit. The ribosome is a large ribonucleoprotein complex responsible for the synthesis of proteins in the cell. This chain is Small ribosomal subunit protein uS7, found in Entamoeba histolytica (strain ATCC 30459 / HM-1:IMSS / ABRM).